The sequence spans 668 residues: MCSTCANVLKYYDWDPHFRLIINPNKFLPIGFCDNPLMCCYPDLLPEFGTVWDCDQSPLQIYLESILGDDEWASTHEAIDPSVPPMHWDSAGKIFQPHPGVLMHHLIGEVAKAWDPNLPLFRLEADDGSITTPEQGTAVGGVIAEPSAQMSTAADMASGKSVDSEWEAFFSFHTSVNWSTSETQGKILFKQSLGPLLNPYLEHLSKLYVAWSGSIEVRFSISGSGVFGGKLAAIVVPPGVDPVQSTSMLQYPHVLFDARQVEPVIFTIPDLRSTLYHVMSDTDTTSLVIMVYNDLINPYANDSNSSGCIVTVETKPGPDFKFHLLKPPGSVLTHGSIPSDLIPKSSSLWIGNRYWTDITDFVIRPFVFQANRHFDFNQETAGWSTPRFRPITITISEKNGSKLGIGVATDYIIPGIPDGWPDTTIADKLIPAGDYSITTGEGNDIKTAQAYDTAAVVKNTTNFRGMYICGSLQRAWGDKKISNTAFITTAIRDGNEIKPSNTIDMTKLAVYQDTHVEQEVQTSDDTLALLGYTGIGEEAIGSNRDRVVRISVLPEAGARGGNHPIFYKNSIKLGYVIRSIDVFNSQILHTSRQLSLNHYLLPPDSFAVYRIIDSNGSWFDIGIDSEGFSFVGVSDIGKLEFPLSASYMGIQLAKIRLASNIRSRMTKL.

Belongs to the caliciviridae capsid protein family. In terms of assembly, homodimer. Homomultimer. Interacts with the minor capsid protein VP2. May bind to VP3 and Vpg proteins. Binds to alpha-2,6-linked sialic acid at surface of target cells. Interacts with host F11R/JAM-1/JAM-A; this interaction allows viral binding and entry into the host cell. As to quaternary structure, homooligomer; probably disulfide-linked. Post-translationally, cleaved by the viral protease to produce mature capsid protein. Cleaved by host caspase-2 and caspase-6 to generate protein p40, this might be linked to the cytopathic effect of the capsid leader protein.

Its subcellular location is the virion. It localises to the host cytoplasm. Functionally, capsid protein self assembles to form an icosahedral capsid with a T=3 symmetry, about 38 nm in diameter, and consisting of 180 capsid proteins. A smaller form of capsid with a diameter of 23 nm might be capsid proteins assembled as icosahedron with T=1 symmetry. The capsid encapsulates the genomic RNA and is decorated with VP2 proteins. Attaches virion to target cells by binding to feline junctional adhesion molecule A (F11R) and/or to alpha-2,6-linked sialic acid. Once attached, the virion is endocytosed. Acidification of the endosome induces conformational change of capsid protein thereby injecting virus genomic RNA into host cytoplasm. In terms of biological role, may function as a viroporin. In Felidae (cat family), this protein is Capsid protein VP1.